The sequence spans 328 residues: Ferredoxin--NADP reductase (328 aa).

FAD-binding residues include Glu36, Gln44, Tyr49, Val89, Phe123, Asp284, and Thr324.

This sequence belongs to the ferredoxin--NADP reductase type 2 family. In terms of assembly, homodimer. FAD is required as a cofactor.

It catalyses the reaction 2 reduced [2Fe-2S]-[ferredoxin] + NADP(+) + H(+) = 2 oxidized [2Fe-2S]-[ferredoxin] + NADPH. This chain is Ferredoxin--NADP reductase, found in Lacticaseibacillus paracasei (strain ATCC 334 / BCRC 17002 / CCUG 31169 / CIP 107868 / KCTC 3260 / NRRL B-441) (Lactobacillus paracasei).